We begin with the raw amino-acid sequence, 437 residues long: UDP-N-acetylmuramoylalanine--D-glutamate ligase (437 aa).

112–118 (GSNGKST) serves as a coordination point for ATP.

The protein belongs to the MurCDEF family.

The protein localises to the cytoplasm. The catalysed reaction is UDP-N-acetyl-alpha-D-muramoyl-L-alanine + D-glutamate + ATP = UDP-N-acetyl-alpha-D-muramoyl-L-alanyl-D-glutamate + ADP + phosphate + H(+). Its pathway is cell wall biogenesis; peptidoglycan biosynthesis. In terms of biological role, cell wall formation. Catalyzes the addition of glutamate to the nucleotide precursor UDP-N-acetylmuramoyl-L-alanine (UMA). The sequence is that of UDP-N-acetylmuramoylalanine--D-glutamate ligase (murD) from Haemophilus influenzae (strain ATCC 51907 / DSM 11121 / KW20 / Rd).